We begin with the raw amino-acid sequence, 134 residues long: 4-carboxymuconolactone decarboxylase (134 aa).

It belongs to the carboxymuconolactone decarboxylase family.

The catalysed reaction is (R)-2-(carboxymethyl)-5-oxo-2,5-dihydro-2-furoate + H(+) = (4,5-dihydro-5-oxofuran-2-yl)-acetate + CO2. The protein operates within aromatic compound metabolism; beta-ketoadipate pathway; 5-oxo-4,5-dihydro-2-furylacetate from 3-carboxy-cis,cis-muconate: step 2/2. In Acinetobacter baylyi (strain ATCC 33305 / BD413 / ADP1), this protein is 4-carboxymuconolactone decarboxylase (pcaC).